The primary structure comprises 242 residues: MKRSKTLRAADAKVDREKLYAPLEAVRLAKETSTTKFDGTVEVAFRLGVDPRKADQMVRGTVNLPHGTGKTARVLVFATGDRAAAAEAAGADIVGDDELINEIAKGNRLNEFDAVVATPDLMGKVGRLGRVLGPRGLMPNPKTGTVTMDVAKAVTEIKGGKIEFRVDKHSNLHFIIGKVSFTDEQLVENYGAALDEILRLKPSAAKGRYIKKAALSTTMGPGIHLDSNRTRNLLVEEDPAAV.

The protein belongs to the universal ribosomal protein uL1 family. In terms of assembly, part of the 50S ribosomal subunit.

Binds directly to 23S rRNA. The L1 stalk is quite mobile in the ribosome, and is involved in E site tRNA release. In terms of biological role, protein L1 is also a translational repressor protein, it controls the translation of the L11 operon by binding to its mRNA. In Streptomyces virginiae (Streptomyces cinnamonensis), this protein is Large ribosomal subunit protein uL1.